We begin with the raw amino-acid sequence, 493 residues long: MLVLDRDADVPMHRQLYEKLRAEILAGHLKADTRLPPTRMMAEDLGVSRNTVITTYDALLAEGYLESRSGSGTWVATLPPDAVTARNSVGRAGAPSLSSRGMRMAAQPRDRTIPDRIAFHPGYPEIKAFPFSTWARLLKRHARYSHEDLYGYHWVTGHPRLKAAIAEYLRASRGVECAPEQVIVVNGTQAALDILARMLVDEGDICWMEEPGYIGAQNSLLSAGAKLVPLPVERDGWSLEDETRPSPRLIFVTPSCQWPLGCLMRMEDRLRLLQIGERHDAWIVEDDYDSEYRFRGRPVPAMQGLDKSGRVIYMGTFAKTLFPSLRIGFIVVPPQLADGFKRVVSNTGHYPSLLLQAALADFISEGYFATHLRRMRRLYAERQKVFVALCRRHLADWLTIDENDAGMQLVARFTRALEDEVLWRAAQGQGVNFSPLSRQFFHSPPQQGAILGYAGIDPKTMREGINSLRSAFLALESSGALPLDRATAAPRGC.

In terms of domain architecture, HTH gntR-type spans 10-78; sequence VPMHRQLYEK…SGSGTWVATL (69 aa). A DNA-binding region (H-T-H motif) is located at residues 38-57; that stretch reads TRMMAEDLGVSRNTVITTYD. Lys319 is subject to N6-(pyridoxal phosphate)lysine.

This sequence in the C-terminal section; belongs to the class-I pyridoxal-phosphate-dependent aminotransferase family. Pyridoxal 5'-phosphate serves as cofactor.

Its function is as follows. Could play a regulatory role in the transcription of the moc genes for rhizopine catabolism. Could also have an aminotransferase activity. The protein is Probable rhizopine catabolism regulatory protein MocR (mocR) of Rhizobium meliloti (Ensifer meliloti).